A 437-amino-acid chain; its full sequence is Trigger factor (437 aa).

Residues 161–246 (DDQVNIDFVG…VNSVSAPVLP (86 aa)) form the PPIase FKBP-type domain.

The protein belongs to the FKBP-type PPIase family. Tig subfamily.

It is found in the cytoplasm. The catalysed reaction is [protein]-peptidylproline (omega=180) = [protein]-peptidylproline (omega=0). Functionally, involved in protein export. Acts as a chaperone by maintaining the newly synthesized protein in an open conformation. Functions as a peptidyl-prolyl cis-trans isomerase. The chain is Trigger factor from Pseudomonas putida (strain GB-1).